Here is a 116-residue protein sequence, read N- to C-terminus: U11-theraphotoxin-Hhn1b (116 aa).

The first 21 residues, 1 to 21 (MNTVRVTFLLVFVLAVSLGQA), serve as a signal peptide directing secretion. Positions 22 to 74 (DKDENRMEMQEKTEQGKSYLDFAENLLLQKLEELEAKLLEEDSEESRNSRQKR) are excised as a propeptide. A compositionally biased stretch (basic and acidic residues) spans 60-69 (LEEDSEESRN). Residues 60–83 (LEEDSEESRNSRQKRCIGEGVPCD) are disordered. Disulfide bonds link Cys75–Cys90, Cys82–Cys95, and Cys89–Cys110.

It belongs to the neurotoxin 14 (magi-1) family. 01 (HNTX-16) subfamily. In terms of tissue distribution, expressed by the venom gland.

The protein localises to the secreted. Its function is as follows. Probable ion channel inhibitor. The protein is U11-theraphotoxin-Hhn1b of Cyriopagopus hainanus (Chinese bird spider).